Here is a 349-residue protein sequence, read N- to C-terminus: Protein RAE1 (349 aa).

The interval 1–21 (MATFGAPATANSNPNKSYEVT) is disordered. Ala-2 bears the N-acetylalanine mark. Polar residues predominate over residues 9 to 21 (TANSNPNKSYEVT). WD repeat units follow at residues 23–62 (SPADSISSLSFSPRADILVATSWDNQVRCWEISRSGASLA), 70–109 (SHDQPVLCSAWKDDGTTVFSGGCDKQAKMWPLLSGGQPVT), 112–151 (MHEGPIAAMAWIPGMNLLATGSWDKTLKYWDTRQQNPVHT), 153–190 (QLPDKCYTLSVKHPLMVVGTADRNLIVFNLQNPQTEFK), and 244–283 (NDIYSVNSLNFHPVHGTFATAGSDGAFNFWDKDSKQRLKA). The short motif at 128-144 (LLATGSWDKTLKYWDTR) is the DWD box element.

Belongs to the WD repeat rae1 family. Part of the nuclear pore complex (NPC). The NPC has an eight-fold symmetrical structure comprising a central transport channel and two rings, the cytoplasmic and nuclear rings, to which eight filaments are attached. The cytoplasmic filaments have loose ends, while the nuclear filaments are joined in a distal ring, forming a nuclear basket. NPCs are highly dynamic in configuration and composition, and can be devided in 3 subcomplexes, the NUP62 subcomplex, the NUP107-160 subcomplex and the NUP93 subcomplex, containing approximately 30 different nucleoporin proteins. Interacts with DDB1A.

It is found in the nucleus envelope. It localises to the nucleus. The protein localises to the nuclear pore complex. The chain is Protein RAE1 from Arabidopsis thaliana (Mouse-ear cress).